A 475-amino-acid chain; its full sequence is Ribulose bisphosphate carboxylase large chain (475 aa).

Lys14 carries the post-translational modification N6,N6,N6-trimethyllysine. Residues Asn123 and Thr173 each coordinate substrate. Lys175 (proton acceptor) is an active-site residue. Lys177 provides a ligand contact to substrate. Positions 201, 203, and 204 each coordinate Mg(2+). N6-carboxylysine is present on Lys201. The Proton acceptor role is filled by His294. Arg295, His327, and Ser379 together coordinate substrate.

The protein belongs to the RuBisCO large chain family. Type I subfamily. As to quaternary structure, heterohexadecamer of 8 large chains and 8 small chains; disulfide-linked. The disulfide link is formed within the large subunit homodimers. Mg(2+) serves as cofactor. The disulfide bond which can form in the large chain dimeric partners within the hexadecamer appears to be associated with oxidative stress and protein turnover.

The protein resides in the plastid. It localises to the chloroplast. It carries out the reaction 2 (2R)-3-phosphoglycerate + 2 H(+) = D-ribulose 1,5-bisphosphate + CO2 + H2O. It catalyses the reaction D-ribulose 1,5-bisphosphate + O2 = 2-phosphoglycolate + (2R)-3-phosphoglycerate + 2 H(+). Functionally, ruBisCO catalyzes two reactions: the carboxylation of D-ribulose 1,5-bisphosphate, the primary event in carbon dioxide fixation, as well as the oxidative fragmentation of the pentose substrate in the photorespiration process. Both reactions occur simultaneously and in competition at the same active site. The chain is Ribulose bisphosphate carboxylase large chain from Actinidia chinensis (Kiwi).